A 702-amino-acid chain; its full sequence is Penicillin-binding protein activator LpoA (702 aa).

The first 26 residues, methionine 1–glycine 26, serve as a signal peptide directing secretion. Cysteine 27 carries the N-palmitoyl cysteine lipid modification. The S-diacylglycerol cysteine moiety is linked to residue cysteine 27. Positions glycine 327–proline 378 are disordered. Residues alanine 330–proline 378 are compositionally biased toward low complexity.

It belongs to the LpoA family. In terms of assembly, interacts with PBP1a.

It is found in the cell outer membrane. In terms of biological role, regulator of peptidoglycan synthesis that is essential for the function of penicillin-binding protein 1A (PBP1a). The protein is Penicillin-binding protein activator LpoA of Klebsiella pneumoniae subsp. pneumoniae (strain ATCC 700721 / MGH 78578).